A 142-amino-acid polypeptide reads, in one-letter code: Large ribosomal subunit protein uL13 (142 aa).

It belongs to the universal ribosomal protein uL13 family. Part of the 50S ribosomal subunit.

This protein is one of the early assembly proteins of the 50S ribosomal subunit, although it is not seen to bind rRNA by itself. It is important during the early stages of 50S assembly. In Polaromonas sp. (strain JS666 / ATCC BAA-500), this protein is Large ribosomal subunit protein uL13.